The chain runs to 187 residues: UPF0301 protein ECA3925 (187 aa).

Belongs to the UPF0301 (AlgH) family.

This Pectobacterium atrosepticum (strain SCRI 1043 / ATCC BAA-672) (Erwinia carotovora subsp. atroseptica) protein is UPF0301 protein ECA3925.